The chain runs to 91 residues: MPLHKSAEKRLRQAARRNERNRARKKELKGLLKNMQKLIDANAAKSEVESAYRAAVQKLDRLGVKRYIHANKASRKKAQLTKMLNSYTPQA.

Basic and acidic residues predominate over residues 1–21; that stretch reads MPLHKSAEKRLRQAARRNERN. Residues 1-24 form a disordered region; the sequence is MPLHKSAEKRLRQAARRNERNRAR.

The protein belongs to the bacterial ribosomal protein bS20 family.

Binds directly to 16S ribosomal RNA. The protein is Small ribosomal subunit protein bS20 of Chlorobaculum parvum (strain DSM 263 / NCIMB 8327) (Chlorobium vibrioforme subsp. thiosulfatophilum).